Reading from the N-terminus, the 142-residue chain is Large ribosomal subunit protein uL11 (142 aa).

This sequence belongs to the universal ribosomal protein uL11 family. Part of the ribosomal stalk of the 50S ribosomal subunit. Interacts with L10 and the large rRNA to form the base of the stalk. L10 forms an elongated spine to which L12 dimers bind in a sequential fashion forming a multimeric L10(L12)X complex. Post-translationally, one or more lysine residues are methylated.

Forms part of the ribosomal stalk which helps the ribosome interact with GTP-bound translation factors. This Dichelobacter nodosus (strain VCS1703A) protein is Large ribosomal subunit protein uL11.